The sequence spans 474 residues: tRNA-2-methylthio-N(6)-dimethylallyladenosine synthase (474 aa).

Residues Lys-3–Ser-120 form the MTTase N-terminal domain. The [4Fe-4S] cluster site is built by Cys-12, Cys-49, Cys-83, Cys-157, Cys-161, and Cys-164. The 233-residue stretch at Lys-143–Arg-375 folds into the Radical SAM core domain. A TRAM domain is found at Arg-378–Arg-441.

The protein belongs to the methylthiotransferase family. MiaB subfamily. In terms of assembly, monomer. [4Fe-4S] cluster serves as cofactor.

It localises to the cytoplasm. The catalysed reaction is N(6)-dimethylallyladenosine(37) in tRNA + (sulfur carrier)-SH + AH2 + 2 S-adenosyl-L-methionine = 2-methylsulfanyl-N(6)-dimethylallyladenosine(37) in tRNA + (sulfur carrier)-H + 5'-deoxyadenosine + L-methionine + A + S-adenosyl-L-homocysteine + 2 H(+). In terms of biological role, catalyzes the methylthiolation of N6-(dimethylallyl)adenosine (i(6)A), leading to the formation of 2-methylthio-N6-(dimethylallyl)adenosine (ms(2)i(6)A) at position 37 in tRNAs that read codons beginning with uridine. This Aliivibrio fischeri (strain ATCC 700601 / ES114) (Vibrio fischeri) protein is tRNA-2-methylthio-N(6)-dimethylallyladenosine synthase.